A 336-amino-acid polypeptide reads, in one-letter code: Palmitoyltransferase PFA3 (336 aa).

At 1–6 the chain is on the cytoplasmic side; the sequence is MNDRLS. A helical transmembrane segment spans residues 7-29; that stretch reads LTSLFPRCLTTCLYIWTAYITLT. The Vacuolar portion of the chain corresponds to 30 to 37; it reads RIHQIPRW. Residues 38 to 58 form a helical membrane-spanning segment; the sequence is FLALTIVPTLAVALYTYYKVI. The Cytoplasmic segment spans residues 59–147; the sequence is ARGPGSPLDF…AECTGFRNQK (89 aa). The DHHC domain maps to 104–154; the sequence is RVCQVCHVWKPDRCHHCSSCDVCILKMDHHCPWFAECTGFRNQKFFIQFLM. A helical transmembrane segment spans residues 148–168; it reads FFIQFLMYTTLYAFLVLIYTC. The Vacuolar segment spans residues 169-188; it reads YELGTWFNSGSFNRELIDFH. Residues 189–209 traverse the membrane as a helical segment; that stretch reads LLGVALLAVAVFISVLAFTCF. Topologically, residues 210–336 are cytoplasmic; the sequence is SIYQVCKNQT…RASVEIIDAN (127 aa).

Belongs to the DHHC palmitoyltransferase family. PFA3 subfamily. In terms of processing, autopalmitoylated.

The protein localises to the vacuole membrane. The enzyme catalyses L-cysteinyl-[protein] + hexadecanoyl-CoA = S-hexadecanoyl-L-cysteinyl-[protein] + CoA. In terms of biological role, palmitoyltransferase specific for VAC8. Palmitoylates VAC8 at one or more of its N-terminal cysteine residues, which is required for its proper membrane localization. This Saccharomyces cerevisiae (strain ATCC 204508 / S288c) (Baker's yeast) protein is Palmitoyltransferase PFA3 (PFA3).